Here is an 89-residue protein sequence, read N- to C-terminus: Small ribosomal subunit protein bS20 (89 aa).

Residues 1–22 form a disordered region; it reads MANTASARKRIRQNERRRERNV. Residues 12–22 are compositionally biased toward basic and acidic residues; the sequence is RQNERRRERNV.

This sequence belongs to the bacterial ribosomal protein bS20 family.

Functionally, binds directly to 16S ribosomal RNA. The chain is Small ribosomal subunit protein bS20 from Gluconobacter oxydans (strain 621H) (Gluconobacter suboxydans).